The chain runs to 764 residues: Subtilisin-like protease SBT3.1 (764 aa).

The first 32 residues, Met1 to Ser32, serve as a signal peptide directing secretion. Residues Gly33–Gln120 constitute a propeptide, activation peptide. Positions Val41–Lys116 constitute an Inhibitor I9 domain. N-linked (GlcNAc...) asparagine glycosylation is present at Asn76. In terms of domain architecture, Peptidase S8 spans Thr124 to Thr610. Asp156 (charge relay system) is an active-site residue. The N-linked (GlcNAc...) asparagine glycan is linked to Asn216. Residue His230 is the Charge relay system of the active site. N-linked (GlcNAc...) asparagine glycosylation is found at Asn245 and Asn374. Ser541 serves as the catalytic Charge relay system. Residues Asn674, Asn711, and Asn747 are each glycosylated (N-linked (GlcNAc...) asparagine).

It belongs to the peptidase S8 family.

The protein localises to the secreted. The polypeptide is Subtilisin-like protease SBT3.1 (Arabidopsis thaliana (Mouse-ear cress)).